The chain runs to 642 residues: MGSLFLAASQGELDTVKNLISSEKIDVNATDEGGATALHWAALNQQIPICKFLLEHGADVNAIGGDLQAAPIHWAAKRGSVKTVHYLVQHGADPLLKDKQGFNCLHLAVHAASPLLVVYLLHLDISVDLRDDQQHTPLMWASYHGNEPITNCLLRWGADVLATDEDKMTPLHWSIVGGNLKCMKLILKEGGIPCTAVTANLSGQLKTPWALASELRVSHLFKQALISNGLKVKETSEEPEKWVVVPSKFQFSQKTFIIFCFLSSFIITGVFFFIMSICPMVISLIIAPLWIYFTFKYITTCIHANIDIVHFYLETPFLAGIFSSIFFWVWCHSLLYIVPKTLPIKPLSSLLFVLISFTCIGLYVRTAFQNPGYVDKIGAVVQRREEISKLLDKDLFNQSHYCLKCFQVKPPRSYHCGACKRCINRYDHHCPWTGNCVGARNHRTFLLFVFTLSTLIPIYFYVAFYYLQNIPIQKKYESYRCLFISGTICQWSLKDMFVLVASLTLFVNWCWVVVLAFTQICQVAHNVTTAEFRLFKRYGTLVPPTKQNSSPKNGHGIHGSFLRTVCGILGLDQCILLIRESNCFVRCFPSRAELGSQNSTSLSRNLSTVNPYDEGSIIKNCKTFWKQNFLNDGRQDEATRHV.

ANK repeat units follow at residues 1–29, 33–62, 67–96, 100–129, 133–162, and 166–196; these read MGSL…DVNA, GGAT…DVNA, LQAA…DPLL, QGFN…SVDL, QQHT…DVLA, and DKMT…PCTA. Over 1 to 256 the chain is Cytoplasmic; the sequence is MGSLFLAASQ…SKFQFSQKTF (256 aa). A run of 2 helical transmembrane segments spans residues 257–277 and 278–298; these read IIFC…IMSI and CPMV…FKYI. At 299-316 the chain is on the cytoplasmic side; sequence TTCIHANIDIVHFYLETP. A helical membrane pass occupies residues 317–337; that stretch reads FLAGIFSSIFFWVWCHSLLYI. Residues 338 to 343 lie on the Lumenal side of the membrane; the sequence is VPKTLP. The helical transmembrane segment at 344–364 threads the bilayer; it reads IKPLSSLLFVLISFTCIGLYV. The Cytoplasmic portion of the chain corresponds to 365–444; it reads RTAFQNPGYV…NCVGARNHRT (80 aa). The DHHC domain occupies 400 to 450; sequence HYCLKCFQVKPPRSYHCGACKRCINRYDHHCPWTGNCVGARNHRTFLLFVF. The active-site S-palmitoyl cysteine intermediate is the cysteine 430. Residues 445–465 traverse the membrane as a helical segment; sequence FLLFVFTLSTLIPIYFYVAFY. Topologically, residues 466-496 are lumenal; that stretch reads YLQNIPIQKKYESYRCLFISGTICQWSLKDM. The chain crosses the membrane as a helical span at residues 497–517; the sequence is FVLVASLTLFVNWCWVVVLAF. Topologically, residues 518-642 are cytoplasmic; it reads TQICQVAHNV…GRQDEATRHV (125 aa).

It belongs to the DHHC palmitoyltransferase family. AKR/ZDHHC17 subfamily.

The protein resides in the early endosome membrane. The protein localises to the golgi apparatus membrane. The enzyme catalyses L-cysteinyl-[protein] + hexadecanoyl-CoA = S-hexadecanoyl-L-cysteinyl-[protein] + CoA. Its function is as follows. Palmitoyltransferase specific for casein kinase 1. The polypeptide is Palmitoyltransferase akr1 (akr1) (Schizosaccharomyces pombe (strain 972 / ATCC 24843) (Fission yeast)).